Reading from the N-terminus, the 223-residue chain is Neurotrophic factor BDNF precursor form (223 aa).

Residues 1 to 5 (SCMKA) form the signal peptide. A propeptide spanning residues 6 to 114 (APMKEVSIRG…AANMSMRVRR (109 aa)) is cleaved from the precursor. N107 is a glycosylation site (N-linked (GlcNAc...) asparagine). 2 cysteine pairs are disulfide-bonded: C127–C194 and C172–C223.

This sequence belongs to the NGF-beta family.

It is found in the secreted. Functionally, promotes the survival of neuronal populations that are all located either in the central nervous system or directly connected to it. This chain is Neurotrophic factor BDNF precursor form (BDNF), found in Exiliboa placata (Oaxacan dwarf boa).